Here is a 128-residue protein sequence, read N- to C-terminus: Small ribosomal subunit protein uS12 (128 aa).

Residues 1-24 (MPTFNQLVKYGREKRKKKSKAPAL) are disordered. A 3-methylthioaspartic acid modification is found at D89. The segment at 105-128 (AGVEGRRQSRSKYGTKRPKEEKGG) is disordered.

This sequence belongs to the universal ribosomal protein uS12 family. In terms of assembly, part of the 30S ribosomal subunit. Contacts proteins S8 and S17. May interact with IF1 in the 30S initiation complex.

Its function is as follows. With S4 and S5 plays an important role in translational accuracy. In terms of biological role, interacts with and stabilizes bases of the 16S rRNA that are involved in tRNA selection in the A site and with the mRNA backbone. Located at the interface of the 30S and 50S subunits, it traverses the body of the 30S subunit contacting proteins on the other side and probably holding the rRNA structure together. The combined cluster of proteins S8, S12 and S17 appears to hold together the shoulder and platform of the 30S subunit. The protein is Small ribosomal subunit protein uS12 of Aquifex aeolicus (strain VF5).